Consider the following 605-residue polypeptide: Elongation factor 4 (605 aa).

The region spanning 11-193 is the tr-type G domain; sequence KRIRNFSIIA…KVVSNIPSPR (183 aa). Residues 23–28 and 140–143 each bind GTP; these read DHGKST and NKID.

It belongs to the TRAFAC class translation factor GTPase superfamily. Classic translation factor GTPase family. LepA subfamily.

The protein resides in the cell membrane. It carries out the reaction GTP + H2O = GDP + phosphate + H(+). Its function is as follows. Required for accurate and efficient protein synthesis under certain stress conditions. May act as a fidelity factor of the translation reaction, by catalyzing a one-codon backward translocation of tRNAs on improperly translocated ribosomes. Back-translocation proceeds from a post-translocation (POST) complex to a pre-translocation (PRE) complex, thus giving elongation factor G a second chance to translocate the tRNAs correctly. Binds to ribosomes in a GTP-dependent manner. This Phytoplasma mali (strain AT) protein is Elongation factor 4.